We begin with the raw amino-acid sequence, 1446 residues long: MDDAGEIHALGGSLRREASSARSGDAAVFFSRSSSRDEDDEEALRWAALEKLPTYDRARTAVLAMPEGELREVNVQRLGPQERHALLQRLAWVGDDHARFLSKFKDRVDRVGIELPTIEVRYENLNVEAEAYVGSRGLPTILNTYANVLEGLANTLHITPNRKQKISILHNVSGIIKPHRMTLLLGPPGAGKTTLLLALAGNVPSGLKVSGQITYNGHTMDEFEPRRSAAYVSQHDLHMGELTVRETVNFSAKCQGIGHRYDLLMELSRREKEENIKPDPEVDIYLKAAATGEQKAEVVTNHILKVLGLDICADTIVGNNMLRGISGGQKKRVTTAEMIVTPGRALFMDEISTGLDSSTTYNIVDSIRQTIHIVGGTAVIALLQPAPETYELFDDIILLSDGQVVYNGPREHVLEFFESVGFKCPERKGVADFLQEVTSRKDQRQYWMHGDETYRYVPVKEFAEAFQSFHVGQAIRSELAIPFDKSRSHPAALKTSKYGASMKELLKANIDREILLMKRNSFVYIFKATQLTLMTFIAMTVFIRTNMHHDSITNGGIYMGALFFGILMIMFNGLAEVGLTIAKLPVFFKQRDLLFYPAWTYSLPSWIIKTPLSLLNVTIWVFITYYVIGFDPNVERLFRQFLLLLVMNETSSGLFRFIAGFARHQVVASTMGSFCILIFMLLGGFILSRENVKKWWIWGYWISPLMYAQNAISVNEFLGHSWNKTIPGFREPLGKLVLESRGVFPEAKWYWIGVGALLGYVLLFNILYTICLTFLNPFDSNQPTISEETLKIKQANLTGDVIEASSRGRITTNTNTADDSNDEAISNHATVNSSPGKKGMVLPFVPLSITFEDIRYSVDMPEVIKAQGVTESRLELLKGISGSFRPGVLTALMGVSGAGKTTLMDVLAGRKTSGYIEGNITISGYPKKQETFARVSGYCEQNDIHSPNVTVYESLAFSAWLRLPAEIDSATRKMFIDEVMELVELSPLKDSLVGLPGVSGLSTEQRKRLTIAVELVANPSIIFMDEPTSGLDARAAAIVMRAIRNTVDTGRTVVCTIHQPSIDIFESFDELFLMKRGGEEIYVGPVGQHSCELIRYFESIEGVSKIKHGYNPSTWMLEVTSTVQEQITGVNFSEIYKNSELYRRNKSMIKELSSPPDGSSDLSFPTEYSQTFITQCLACLWKQSLSYWRNPPYTAVKYFYTIVIALLFGTMFWGVGRKRSNQQDLFNAMGSMYASVLFMGVQNSSSVQPVVSVERTVFYRERAAHMYSPLPYALGQVAIELPYILVQSLIYGVLVYAMIGFEWTAAKFFWYLFFMYFTLSYYTFYGMMSVGLTPSYNVASVVSTAFYAIWNLFSGFIIPRTRIPIWWRWYYWVCPVAWTLYGLVTSQFGDVTDTFDNGVRISDFVESYFGYHRDFLWVVAVMVVSFAVLFAFLFGLSIKIFNFQKR.

One can recognise an ABC transporter 1 domain in the interval Ala-153–Glu-426. An ATP-binding site is contributed by Gly-186–Thr-193. The ABC transmembrane type-2 1 domain maps to Glu-504–Phe-717. Transmembrane regions (helical) follow at residues Val-523–Ile-543, Gly-555–Ala-575, Thr-610–Phe-630, Phe-641–Phe-661, Val-666–Ile-686, and Ile-752–Leu-772. In terms of domain architecture, ABC transporter 2 spans Ile-849–Glu-1101. Gly-894–Thr-901 provides a ligand contact to ATP. The ABC transmembrane type-2 2 domain occupies Thr-1174–Phe-1388. 7 consecutive transmembrane segments (helical) span residues Ala-1195–Val-1215, Leu-1225–Gln-1242, Leu-1281–Phe-1301, Phe-1308–Met-1328, Val-1338–Ile-1358, Ile-1363–Leu-1383, and Phe-1415–Gly-1435.

It belongs to the ABC transporter superfamily. ABCG family. PDR (TC 3.A.1.205) subfamily.

The protein resides in the membrane. Its function is as follows. May be a general defense protein. This is ABC transporter G family member 53 from Oryza sativa subsp. japonica (Rice).